A 377-amino-acid chain; its full sequence is SH2/SH3 adapter protein NCK1 (377 aa).

N-acetylalanine is present on Ala-2. The SH3 1 domain occupies 2 to 61 (AEEVVVVAKFDYVAQQEQELDIKKNERLWLLDDSKSWWRVRNSMNKTGFVPSNYVERKNS). A phosphoserine mark is found at Ser-85, Ser-89, Ser-91, and Ser-96. The residue at position 105 (Tyr-105) is a Phosphotyrosine. Residues 106–165 (DLNMPAYVKFNYMAEREDELSLIKGTKVIVMEKCSDGWWRGSYNGQVGWFPSNYVTEEGD) enclose the SH3 2 domain. A Phosphoserine modification is found at Ser-166. The SH3 3 domain occupies 190–252 (QVLHVVQALY…PKNYVTVMQN (63 aa)). The SH2 domain maps to 282–376 (WYYGKVTRHQ…GEKLYLVKHL (95 aa)).

In terms of assembly, interacts (via SH2 domain and SH3 domain 2) with EGFR. Interacts with PAK1 and SOS1. Interacts (via SH3 domains) with PKN2. Associates with BLNK, PLCG1, VAV1 and NCK1 in a B-cell antigen receptor-dependent fashion. Interacts with SOCS7. This interaction is required for nuclear import. Part of a complex containing PPP1R15B, PP1 and NCK1. Interacts with RALGPS1. Interacts with CAV2 (tyrosine phosphorylated form). Interacts with ADAM15. Interacts with FASLG. Directly interacts with RASA1. Interacts with isoform 4 of MINK1. Interacts with FLT1 (tyrosine phosphorylated). Interacts with KDR (tyrosine phosphorylated). Interacts (via SH2 domain) with EPHB1; activates the JUN cascade to regulate cell adhesion. Interacts with EPHA2. Interacts (via SH2 domain) with PDGFRB (tyrosine phosphorylated). Interacts with the inactive form of EIF2AK2/PKR. Interacts with PTPN1. Interacts with INSR/insulin receptor (in response to insulin stimulation); This interaction may mediate PTPN1 recruitment leading to INSR dephosphorylation. Interacts with IRS1. Post-translationally, phosphorylated on Ser and Tyr residues. Phosphorylated in response to activation of EGFR and FcERI. Phosphorylated by activated PDGFRB.

The protein localises to the cytoplasm. The protein resides in the endoplasmic reticulum. It localises to the nucleus. In terms of biological role, adapter protein which associates with tyrosine-phosphorylated growth factor receptors, such as KDR and PDGFRB, or their cellular substrates. Maintains low levels of EIF2S1 phosphorylation by promoting its dephosphorylation by PP1. Plays a role in the DNA damage response, not in the detection of the damage by ATM/ATR, but for efficient activation of downstream effectors, such as that of CHEK2. Plays a role in ELK1-dependent transcriptional activation in response to activated Ras signaling. Modulates the activation of EIF2AK2/PKR by dsRNA. May play a role in cell adhesion and migration through interaction with ephrin receptors. The polypeptide is SH2/SH3 adapter protein NCK1 (NCK1) (Homo sapiens (Human)).